Here is a 470-residue protein sequence, read N- to C-terminus: Cell division protein FtsP (470 aa).

Positions 1–27 (MSFSRRQFLQASGIALCAGAIPLRANA) form a signal peptide, tat-type signal. Positions 222-287 (VEVSRGWVRL…RREILVDMTN (66 aa)) constitute a Plastocyanin-like domain.

The protein belongs to the FtsP family. In terms of processing, predicted to be exported by the Tat system. The position of the signal peptide cleavage has not been experimentally proven.

It localises to the periplasm. Its function is as follows. Cell division protein that is required for growth during stress conditions. May be involved in protecting or stabilizing the divisomal assembly under conditions of stress. The protein is Cell division protein FtsP of Salmonella typhi.